We begin with the raw amino-acid sequence, 403 residues long: Probable tRNA sulfurtransferase (403 aa).

The 106-residue stretch at 60–165 (QLAEERLKPI…KEGVFLSCRT (106 aa)) folds into the THUMP domain. Residues 183-184 (ML), 208-209 (HF), R265, G287, and Q296 each bind ATP.

It belongs to the ThiI family.

The protein localises to the cytoplasm. It carries out the reaction [ThiI sulfur-carrier protein]-S-sulfanyl-L-cysteine + a uridine in tRNA + 2 reduced [2Fe-2S]-[ferredoxin] + ATP + H(+) = [ThiI sulfur-carrier protein]-L-cysteine + a 4-thiouridine in tRNA + 2 oxidized [2Fe-2S]-[ferredoxin] + AMP + diphosphate. The catalysed reaction is [ThiS sulfur-carrier protein]-C-terminal Gly-Gly-AMP + S-sulfanyl-L-cysteinyl-[cysteine desulfurase] + AH2 = [ThiS sulfur-carrier protein]-C-terminal-Gly-aminoethanethioate + L-cysteinyl-[cysteine desulfurase] + A + AMP + 2 H(+). It participates in cofactor biosynthesis; thiamine diphosphate biosynthesis. Functionally, catalyzes the ATP-dependent transfer of a sulfur to tRNA to produce 4-thiouridine in position 8 of tRNAs, which functions as a near-UV photosensor. Also catalyzes the transfer of sulfur to the sulfur carrier protein ThiS, forming ThiS-thiocarboxylate. This is a step in the synthesis of thiazole, in the thiamine biosynthesis pathway. The sulfur is donated as persulfide by IscS. In Listeria innocua serovar 6a (strain ATCC BAA-680 / CLIP 11262), this protein is Probable tRNA sulfurtransferase.